A 399-amino-acid polypeptide reads, in one-letter code: 1-deoxy-D-xylulose 5-phosphate reductoisomerase (399 aa).

Residues Thr-13, Gly-14, Ser-15, Ile-16, and Asn-127 each contribute to the NADPH site. Lys-128 lines the 1-deoxy-D-xylulose 5-phosphate pocket. Position 129 (Glu-129) interacts with NADPH. Asp-153 is a binding site for Mn(2+). Ser-154, Glu-155, Ser-187, and His-210 together coordinate 1-deoxy-D-xylulose 5-phosphate. Glu-155 provides a ligand contact to Mn(2+). An NADPH-binding site is contributed by Gly-216. 1-deoxy-D-xylulose 5-phosphate-binding residues include Ser-223, Asn-228, Lys-229, and Glu-232. Glu-232 contacts Mn(2+).

This sequence belongs to the DXR family. It depends on Mg(2+) as a cofactor. Requires Mn(2+) as cofactor.

The enzyme catalyses 2-C-methyl-D-erythritol 4-phosphate + NADP(+) = 1-deoxy-D-xylulose 5-phosphate + NADPH + H(+). It functions in the pathway isoprenoid biosynthesis; isopentenyl diphosphate biosynthesis via DXP pathway; isopentenyl diphosphate from 1-deoxy-D-xylulose 5-phosphate: step 1/6. Functionally, catalyzes the NADPH-dependent rearrangement and reduction of 1-deoxy-D-xylulose-5-phosphate (DXP) to 2-C-methyl-D-erythritol 4-phosphate (MEP). The protein is 1-deoxy-D-xylulose 5-phosphate reductoisomerase of Bordetella pertussis (strain Tohama I / ATCC BAA-589 / NCTC 13251).